Here is a 237-residue protein sequence, read N- to C-terminus: Type III pantothenate kinase (237 aa).

6-13 (DAGNSRVK) contacts ATP. Substrate is bound by residues Y86 and 93 to 96 (GADR). The active-site Proton acceptor is D95. An ATP-binding site is contributed by T118. T168 serves as a coordination point for substrate.

The protein belongs to the type III pantothenate kinase family. As to quaternary structure, homodimer. Requires NH4(+) as cofactor. K(+) is required as a cofactor.

Its subcellular location is the cytoplasm. The enzyme catalyses (R)-pantothenate + ATP = (R)-4'-phosphopantothenate + ADP + H(+). The protein operates within cofactor biosynthesis; coenzyme A biosynthesis; CoA from (R)-pantothenate: step 1/5. Its function is as follows. Catalyzes the phosphorylation of pantothenate (Pan), the first step in CoA biosynthesis. The sequence is that of Type III pantothenate kinase from Chromobacterium violaceum (strain ATCC 12472 / DSM 30191 / JCM 1249 / CCUG 213 / NBRC 12614 / NCIMB 9131 / NCTC 9757 / MK).